The following is a 276-amino-acid chain: Nickel import system permease protein NikC (276 aa).

5 helical membrane-spanning segments follow: residues 10–30, 73–93, 108–128, 186–206, and 238–258; these read LIFF…FFVS, LFVT…LGLF, FIDV…ASFF, IIPA…LYIS, and IMLI…NLTG. Residues 69–258 form the ABC transmembrane type-1 domain; that stretch reads ARSTLFVTVL…ITILIFNLTG (190 aa).

The protein belongs to the binding-protein-dependent transport system permease family. OppBC subfamily. In terms of assembly, the complex is composed of two ATP-binding proteins (NikD and NikE), two transmembrane proteins (NikB and NikC) and a solute-binding protein (NikA).

The protein localises to the cell membrane. In terms of biological role, part of the ABC transporter complex NikABCDE (Opp2) involved in nickel import. Probably responsible for the translocation of the substrate across the membrane. The chain is Nickel import system permease protein NikC from Staphylococcus aureus (strain USA300).